Consider the following 125-residue polypeptide: Histone H2B type 1 (125 aa).

The disordered stretch occupies residues 1-36; the sequence is MPEPAKSRPAPKKGSKKAVTKAQKKDGKERKRSRKE. At P2 the chain carries N-acetylproline. Residue E3 is modified to ADP-ribosyl glutamic acid. K6 carries the post-translational modification N6-(2-hydroxyisobutyryl)lysine; alternate. Residue K6 is modified to N6-(beta-hydroxybutyryl)lysine; alternate. An N6-acetyllysine; alternate modification is found at K6. K6 carries the post-translational modification N6-butyryllysine; alternate. Residue K6 is modified to N6-crotonyllysine; alternate. K6 carries the post-translational modification N6-lactoyllysine; alternate. A Glycyl lysine isopeptide (Lys-Gly) (interchain with G-Cter in SUMO2); alternate cross-link involves residue K6. S7 is subject to ADP-ribosylserine. Over residues 9–19 the composition is skewed to basic residues; the sequence is PAPKKGSKKAV. Position 12 is an N6-(beta-hydroxybutyryl)lysine; alternate (K12). N6-acetyllysine; alternate occurs at positions 12 and 13. K12 and K13 each carry N6-crotonyllysine; alternate. K12 carries the N6-lactoyllysine; alternate modification. K13 bears the N6-(2-hydroxyisobutyryl)lysine; alternate mark. Phosphoserine; by STK4/MST1 is present on S15. 4 positions are modified to N6-acetyllysine; alternate: K16, K17, K21, and K24. N6-crotonyllysine; alternate occurs at positions 16, 17, 21, and 24. N6-lactoyllysine; alternate is present on residues K16, K17, K21, and K24. K17 is modified (N6-glutaryllysine; alternate). N6-(2-hydroxyisobutyryl)lysine; alternate is present on residues K21 and K24. An N6-(beta-hydroxybutyryl)lysine; alternate modification is found at K21. K21 is subject to N6-butyryllysine; alternate. Residue K21 forms a Glycyl lysine isopeptide (Lys-Gly) (interchain with G-Cter in SUMO2); alternate linkage. K25 carries the post-translational modification N6-(2-hydroxyisobutyryl)lysine. Residue K35 is modified to N6-(2-hydroxyisobutyryl)lysine; alternate. Residue K35 is modified to N6-(beta-hydroxybutyryl)lysine; alternate. Residue K35 is modified to N6-crotonyllysine; alternate. K35 carries the N6-glutaryllysine; alternate modification. K35 is subject to N6-succinyllysine; alternate. Residue K35 forms a Glycyl lysine isopeptide (Lys-Gly) (interchain with G-Cter in ubiquitin); alternate linkage. A PolyADP-ribosyl glutamic acid modification is found at E36. The residue at position 37 (S37) is a Phosphoserine; by AMPK. 3 positions are modified to N6-(2-hydroxyisobutyryl)lysine; alternate: K44, K47, and K58. K44 is modified (N6-lactoyllysine; alternate). 2 positions are modified to N6-glutaryllysine; alternate: K44 and K47. K47 carries the post-translational modification N6-methyllysine; alternate. K58 is modified (N6,N6-dimethyllysine; alternate). R79 is modified (dimethylated arginine). An N6-(2-hydroxyisobutyryl)lysine; alternate modification is found at K85. The residue at position 85 (K85) is an N6-acetyllysine; alternate. K85 carries the post-translational modification N6-lactoyllysine; alternate. Position 85 is an N6,N6,N6-trimethyllysine; alternate (K85). Omega-N-methylarginine is present on residues R86 and R92. K108 bears the N6-(2-hydroxyisobutyryl)lysine; alternate mark. K108 carries the post-translational modification N6-lactoyllysine; alternate. K108 carries the post-translational modification N6-glutaryllysine; alternate. K108 is subject to N6-methyllysine; alternate. S112 carries an O-linked (GlcNAc) serine glycan. Residue T115 is modified to Phosphothreonine. 2 positions are modified to N6-(2-hydroxyisobutyryl)lysine; alternate: K116 and K120. K116 carries the N6-(beta-hydroxybutyryl)lysine; alternate modification. 2 positions are modified to N6-lactoyllysine; alternate: K116 and K120. Residues K116 and K120 each carry the N6-glutaryllysine; alternate modification. K116 and K120 each carry N6-succinyllysine; alternate. The residue at position 116 (K116) is an N6-methylated lysine; alternate. K120 is covalently cross-linked (Glycyl lysine isopeptide (Lys-Gly) (interchain with G-Cter in ubiquitin); alternate).

It belongs to the histone H2B family. The nucleosome is a histone octamer containing two molecules each of H2A, H2B, H3 and H4 assembled in one H3-H4 heterotetramer and two H2A-H2B heterodimers. The octamer wraps approximately 147 bp of DNA. In terms of processing, monoubiquitination at Lys-35 (H2BK34Ub) by the MSL1/MSL2 dimer is required for histone H3 'Lys-4' (H3K4me) and 'Lys-79' (H3K79me) methylation and transcription activation at specific gene loci, such as HOXA9 and MEIS1 loci. Similarly, monoubiquitination at Lys-120 (H2BK120Ub) by the RNF20/40 complex gives a specific tag for epigenetic transcriptional activation and is also prerequisite for histone H3 'Lys-4' and 'Lys-79' methylation. It also functions cooperatively with the FACT dimer to stimulate elongation by RNA polymerase II. H2BK120Ub also acts as a regulator of mRNA splicing: deubiquitination by USP49 is required for efficient cotranscriptional splicing of a large set of exons. Post-translationally, phosphorylated on Ser-15 (H2BS14ph) by STK4/MST1 during apoptosis; which facilitates apoptotic chromatin condensation. Also phosphorylated on Ser-15 in response to DNA double strand breaks (DSBs), and in correlation with somatic hypermutation and immunoglobulin class-switch recombination. Phosphorylation at Ser-37 (H2BS36ph) by AMPK in response to stress promotes transcription. ADP-ribosylated by PARP1 or PARP2 on Ser-7 (H2BS6ADPr) in response to DNA damage. H2BS6ADPr promotes recruitment of CHD1L. Mono-ADP-ribosylated on Glu-3 (H2BE2ADPr) by PARP3 in response to single-strand breaks. Poly ADP-ribosylation on Glu-36 (H2BE35ADPr) by PARP1 regulates adipogenesis: it inhibits phosphorylation at Ser-37 (H2BS36ph), thereby blocking expression of pro-adipogenetic genes. In terms of processing, crotonylation (Kcr) is specifically present in male germ cells and marks testis-specific genes in post-meiotic cells, including X-linked genes that escape sex chromosome inactivation in haploid cells. Crotonylation marks active promoters and enhancers and confers resistance to transcriptional repressors. It is also associated with post-meiotically activated genes on autosomes. Post-translationally, glcNAcylation at Ser-112 promotes monoubiquitination of Lys-120. It fluctuates in response to extracellular glucose, and associates with transcribed genes. Lactylated in macrophages by EP300/P300 by using lactoyl-CoA directly derived from endogenous or exogenous lactate, leading to stimulates gene transcription.

It is found in the nucleus. The protein resides in the chromosome. Core component of nucleosome. Nucleosomes wrap and compact DNA into chromatin, limiting DNA accessibility to the cellular machineries which require DNA as a template. Histones thereby play a central role in transcription regulation, DNA repair, DNA replication and chromosomal stability. DNA accessibility is regulated via a complex set of post-translational modifications of histones, also called histone code, and nucleosome remodeling. Functionally, has broad antibacterial activity. May contribute to the formation of the functional antimicrobial barrier of the colonic epithelium, and to the bactericidal activity of amniotic fluid. The polypeptide is Histone H2B type 1 (Rattus norvegicus (Rat)).